Reading from the N-terminus, the 2407-residue chain is Daf-12-interacting protein 1 (2407 aa).

Over residues 90–112 the composition is skewed to low complexity; sequence QNSSMASMSSTPSSGQSSSPRNA. The tract at residues 90 to 152 is disordered; it reads QNSSMASMSS…PHLSVQSQQR (63 aa). The region spanning 277-335 is the RRM domain; the sequence is CSVHVPHLDRHSPDHYRRRFESYGQVIDVDMVKSNDNKAFAVVQFTNIDDAQKALQDTN. Disordered regions lie at residues 439–632, 737–767, 785–849, 874–896, 921–986, 993–1012, 1025–1844, 1858–1918, 1932–1976, 2077–2103, and 2172–2200; these read EVAA…LELD, ATDSKELGRDQPAGGRTSGRPSLDESRTNRL, LCIG…GRPA, PTHDEMMAPRGTPPSRRSSETMV, LIAA…PSNA, RSQSMTSGDPKKSAPSTPVV, SNQP…EDSE, IAQE…VNNH, LQPA…QQSD, EENERKVEEDRREKQRKEEERQRLAAA, and SIQRPSSTASTSSNPPKAPLQPSASVNQN. Residues 443 to 456 are compositionally biased toward polar residues; sequence RSSSPTSKSENDQG. The span at 512-529 shows a compositional bias: acidic residues; it reads EDSDEQNDVDEEDDEDVV. Composition is skewed to basic and acidic residues over residues 530 to 541, 548 to 564, and 573 to 586; these read SEEKRHEPEEGK, GHRDESNGDKDHEDSSE, and SHHETSHSPEKDSE. Positions 587 to 603 are enriched in polar residues; the sequence is AYQSRSFSPLNYQSQSP. Over residues 618 to 627 the composition is skewed to low complexity; the sequence is SPTTSSASSS. Composition is skewed to polar residues over residues 791–826 and 837–849; these read TPSTPFPTSQPLLVNTTHLPGTSQPSTSGGITTPRS and SRHNSMSSTGRPA. The span at 924-946 shows a compositional bias: polar residues; that stretch reads ATSTGTHSVSSSAHSTPRHSISG. A compositionally biased stretch (basic and acidic residues) spans 966 to 978; the sequence is SRPEKVQIRHDTI. The segment covering 1043-1052 has biased composition (polar residues); it reads SALQNIQNHQ. Residues 1053–1070 show a composition bias toward low complexity; that stretch reads PPHSNANSTPSTPSTSTH. Residues 1086 to 1153 show a composition bias toward basic and acidic residues; the sequence is KEKEEREREA…KVRKKAEKEK (68 aa). Residues 1165-1177 are compositionally biased toward acidic residues; the sequence is SDESDSDSNDELD. Composition is skewed to basic and acidic residues over residues 1178–1195, 1218–1227, 1279–1293, 1304–1320, 1335–1355, and 1376–1398; these read LDVRKSTKEMTQEEKDHQ, RAHDSFEKMQ, ADQRLKVLKEREKGE, NDAGEIHQQRLTEDREN, QGERKNVPKRMRRDDSEDAAA, and RRSSEDESKKNAKRDFRDIPHED. Low complexity-rich tracts occupy residues 1456 to 1471 and 1488 to 1498; these read PKHLSPKTSTSSTKRS and TTSSTSTATTS. Residues 1534–1547 are compositionally biased toward polar residues; sequence SMNSAADSPMSTTG. A compositionally biased stretch (low complexity) spans 1570-1595; that stretch reads SSSGQHDSSSGSSSDSSSSDGSTSSD. 2 stretches are compositionally biased toward basic and acidic residues: residues 1679 to 1691 and 1703 to 1726; these read SEEHEDSHEHGDS and EHQEEKEELENKILDVAAEHHEEQ. Positions 1749 to 1770 are enriched in polar residues; sequence TQAQEKSAHTLISDQETDQAVQ. Residues 1792 to 1805 are compositionally biased toward basic and acidic residues; it reads NEKEVSGKDPHNIK. Over residues 1809–1826 the composition is skewed to polar residues; it reads PLNNGHTDLLFSPSSSAH. Composition is skewed to basic and acidic residues over residues 1827-1836 and 1873-1892; these read ASEKQSTKSE and EEVKLETSPVPKEEPIKMEE. Composition is skewed to polar residues over residues 1895–1911 and 1932–1942; these read EQTPTPDLISNNESQDT and LQPASQHQVAQ. Positions 1962-1975 are enriched in low complexity; it reads SQQSQPSPMSSQQS. Residues 2049–2110 are a coiled coil; sequence NQMMQAKMKQ…AAATAAATMA (62 aa). The span at 2077-2099 shows a compositional bias: basic and acidic residues; that stretch reads EENERKVEEDRREKQRKEEERQR. A compositionally biased stretch (low complexity) spans 2176 to 2186; it reads PSSTASTSSNP. In terms of domain architecture, SPOC spans 2213-2383; that stretch reads QRWFYKHFPM…TRYLLIVFTN (171 aa).

Isoform d interacts with daf-12. Isoform d is widely expressed: detected in the hypodermis, seam cells, intestine, somatic gonad, neurons, vulval precursors, body wall muscle and pharynx.

It localises to the nucleus. Probable transcriptional corepressor which modulates activity of the nuclear hormone receptor daf-12 to regulate the dauer diapause. The polypeptide is Daf-12-interacting protein 1 (Caenorhabditis elegans).